The sequence spans 101 residues: Small ribosomal subunit protein uS14 (101 aa).

Belongs to the universal ribosomal protein uS14 family. In terms of assembly, part of the 30S ribosomal subunit. Contacts proteins S3 and S10.

Its function is as follows. Binds 16S rRNA, required for the assembly of 30S particles and may also be responsible for determining the conformation of the 16S rRNA at the A site. This is Small ribosomal subunit protein uS14 from Chlamydia pneumoniae (Chlamydophila pneumoniae).